Here is a 134-residue protein sequence, read N- to C-terminus: Iron-sulfur cluster insertion protein ErpA (134 aa).

The iron-sulfur cluster site is built by cysteine 47, cysteine 126, and cysteine 128.

Belongs to the HesB/IscA family. As to quaternary structure, homodimer. It depends on iron-sulfur cluster as a cofactor.

Functionally, required for insertion of 4Fe-4S clusters for at least IspG. This chain is Iron-sulfur cluster insertion protein ErpA, found in Coxiella burnetii (strain Dugway 5J108-111).